The primary structure comprises 202 residues: dITP/XTP pyrophosphatase (202 aa).

T7–K12 is a substrate binding site. Mg(2+)-binding residues include E37 and D66. The active-site Proton acceptor is D66. Substrate contacts are provided by residues S67, F155 to D158, K178, and H183 to R184.

The protein belongs to the HAM1 NTPase family. As to quaternary structure, homodimer. Mg(2+) serves as cofactor.

The catalysed reaction is XTP + H2O = XMP + diphosphate + H(+). It catalyses the reaction dITP + H2O = dIMP + diphosphate + H(+). It carries out the reaction ITP + H2O = IMP + diphosphate + H(+). Functionally, pyrophosphatase that catalyzes the hydrolysis of nucleoside triphosphates to their monophosphate derivatives, with a high preference for the non-canonical purine nucleotides XTP (xanthosine triphosphate), dITP (deoxyinosine triphosphate) and ITP. Seems to function as a house-cleaning enzyme that removes non-canonical purine nucleotides from the nucleotide pool, thus preventing their incorporation into DNA/RNA and avoiding chromosomal lesions. This is dITP/XTP pyrophosphatase from Aquifex aeolicus (strain VF5).